Here is a 165-residue protein sequence, read N- to C-terminus: Chorismate pyruvate-lyase (165 aa).

Substrate-binding residues include methionine 35, arginine 77, leucine 115, and glutamate 156.

It belongs to the UbiC family. As to quaternary structure, monomer.

Its subcellular location is the cytoplasm. The enzyme catalyses chorismate = 4-hydroxybenzoate + pyruvate. It participates in cofactor biosynthesis; ubiquinone biosynthesis. In terms of biological role, removes the pyruvyl group from chorismate, with concomitant aromatization of the ring, to provide 4-hydroxybenzoate (4HB) for the ubiquinone pathway. This chain is Chorismate pyruvate-lyase, found in Escherichia coli O17:K52:H18 (strain UMN026 / ExPEC).